The sequence spans 107 residues: Histone H4 (107 aa).

Residues 1–16 are compositionally biased toward gly residues; that stretch reads MPGRGKGGKGGKGYGK. The interval 1-23 is disordered; the sequence is MPGRGKGGKGGKGYGKVGAKRHA. Residues 17 to 21 mediate DNA binding; that stretch reads VGAKR.

The protein belongs to the histone H4 family. As to quaternary structure, the nucleosome is a histone octamer containing two molecules each of H2A, H2B, H3 and H4 assembled in one H3-H4 heterotetramer and two H2A-H2B heterodimers. The octamer wraps approximately 147 bp of DNA.

Its subcellular location is the nucleus. The protein localises to the chromosome. Functionally, core component of nucleosome. Nucleosomes wrap and compact DNA into chromatin, limiting DNA accessibility to the cellular machineries which require DNA as a template. Histones thereby play a central role in transcription regulation, DNA repair, DNA replication and chromosomal stability. DNA accessibility is regulated via a complex set of post-translational modifications of histones, also called histone code, and nucleosome remodeling. The protein is Histone H4 of Euplotes crassus.